A 434-amino-acid chain; its full sequence is Septin-7 (434 aa).

Tyr-27 is subject to Phosphotyrosine. In terms of domain architecture, Septin-type G spans 44–313 (RGFEFTLMVV…ENYRSRKLAA (270 aa)). An interaction with SEPTIN12 region spans residues 44–314 (RGFEFTLMVV…NYRSRKLAAV (271 aa)). The tract at residues 54 to 61 (GESGLGKS) is G1 motif. GTP is bound at residue 54–61 (GESGLGKS). Phosphoserine is present on Ser-74. GTP is bound by residues Thr-87, Gly-113, and 192–200 (KADTLTPEE). The segment at 110-113 (DTPG) is G3 motif. Residues 191–194 (AKAD) are G4 motif. A Phosphothreonine modification is found at Thr-225. Residues Gly-247 and Arg-262 each coordinate GTP. A coiled-coil region spans residues 329–434 (TKSPLAQMEE…EKNKKKGKIF (106 aa)). Position 331 is a phosphoserine (Ser-331). At Lys-370 the chain carries N6-acetyllysine. Residues 377–407 (QRRHEQMKKNLEAQHKGLEEKRRQFEDEKAN) are compositionally biased toward basic and acidic residues. The segment at 377-434 (QRRHEQMKKNLEAQHKGLEEKRRQFEDEKANWEAQQRILEQQNSSRTLEKNKKKGKIF) is disordered. Ser-421 bears the Phosphoserine mark. A Phosphothreonine modification is found at Thr-423.

Belongs to the TRAFAC class TrmE-Era-EngA-EngB-Septin-like GTPase superfamily. Septin GTPase family. Septins polymerize into heterooligomeric protein complexes that form filaments, and associate with cellular membranes, actin filaments and microtubules. GTPase activity is required for filament formation. Filaments are assembled from asymmetrical heterotrimers, composed of SEPTIN2, SEPTIN6 and SEPTIN7 that associate head-to-head to form a hexameric unit. Within the trimer, directly interacts with SEPTIN6, while interaction with SEPTIN2 seems indirect. In the absence of SEPTIN6, forms homodimers. Interacts directly with CENPE and links CENPE to septin filaments composed of SEPTIN2, SEPTIN6 and SEPTIN7. Interacts with SEPTIN5, SEPTIN8, SEPTIN9 and SEPTIN11. Component of a septin core octameric complex consisting of SEPTIN12, SEPTIN7, SEPTIN6 and SEPTIN2 or SEPTIN4 in the order 12-7-6-2-2-6-7-12 or 12-7-6-4-4-6-7-12 and located in the sperm annulus; the SEPTIN12:SEPTIN7 association is mediated by the respective GTP-binding domains.

The protein resides in the cytoplasm. Its subcellular location is the chromosome. It is found in the centromere. It localises to the kinetochore. The protein localises to the cytoskeleton. The protein resides in the spindle. Its subcellular location is the cleavage furrow. It is found in the midbody. It localises to the cilium axoneme. The protein localises to the cell projection. The protein resides in the cilium. Its subcellular location is the flagellum. Filament-forming cytoskeletal GTPase. Required for normal organization of the actin cytoskeleton. Required for normal progress through mitosis. Involved in cytokinesis. Required for normal association of CENPE with the kinetochore. Plays a role in ciliogenesis and collective cell movements. Forms a filamentous structure with SEPTIN12, SEPTIN6, SEPTIN2 and probably SEPTIN4 at the sperm annulus which is required for the structural integrity and motility of the sperm tail during postmeiotic differentiation. The chain is Septin-7 from Pan troglodytes (Chimpanzee).